Here is a 433-residue protein sequence, read N- to C-terminus: Protein FAM98B (433 aa).

Residues 303-433 (GRVPDRGGRP…GGGGGGYRRY (131 aa)) are disordered. Over residues 305-314 (VPDRGGRPNE) the composition is skewed to basic and acidic residues. A compositionally biased stretch (gly residues) spans 331–433 (GGGGRGGWGG…GGGGGGYRRY (103 aa)).

The protein belongs to the FAM98 family. In terms of assembly, homodimer. Component of the tRNA-splicing ligase complex. Interacts with FAM98A. In terms of tissue distribution, expressed strongly in colorectal cancer tissues compared to wild-type colon samples (at protein level). Expressed strongly in colorectal cancer tissues compared to wild-type colon samples.

It localises to the nucleus. Its subcellular location is the cytoplasm. In terms of biological role, positively stimulates PRMT1-induced protein arginine dimethylated arginine methylation. In Homo sapiens (Human), this protein is Protein FAM98B (FAM98B).